Consider the following 745-residue polypeptide: Immunoglobulin superfamily containing leucine-rich repeat protein 2 (745 aa).

The first 19 residues, 1-19 (MGPFGALCLAWALLGVVRA), serve as a signal peptide directing secretion. The LRRNT domain maps to 20–51 (CPEPCACVDKYAHQFADCAYKELREVPEGLPA). Residues 20–589 (CPEPCACVDK…VFSTKKELPS (570 aa)) are Extracellular-facing. Residues Asn52 and Asn73 are each glycosylated (N-linked (GlcNAc...) asparagine). LRR repeat units lie at residues 52-73 (NVTT…AFVN), 76-97 (QVTS…ALAV), 100-123 (QLKN…RNLS), 124-145 (ALQL…ALGA), and 148-169 (DLRS…TFDA). The N-linked (GlcNAc...) asparagine glycan is linked to Asn121. An LRRCT domain is found at 181 to 232 (NPFHCSCGLVWLQAWAASTRVSLPEPDSIACASPPELQGVPVHRLPALPCAP). The Ig-like domain occupies 233–372 (PSVRLSAEPP…GTNSTSLRVT (140 aa)). A disulfide bridge links Cys260 with Cys356. Residues 290-300 (KEEDGGDKVED) show a composition bias toward basic and acidic residues. A disordered region spans residues 290-328 (KEEDGGDKVEDGEGDGDEDLPTQTEAPTPTPAPAWPAPP). Pro residues predominate over residues 317–328 (TPTPAPAWPAPP). Asn338 and Asn365 each carry an N-linked (GlcNAc...) asparagine glycan. The interval 376–423 (AGPPKHAPGTGEEPDAQVPTSERKATTKGRSNSVLPFKPEGKTKGQGL) is disordered. Residues Asn474 and Asn563 are each glycosylated (N-linked (GlcNAc...) asparagine). A helical transmembrane segment spans residues 590–610 (LLVIVTVSVFLLVLATVPLLG). At 611 to 745 (AACCHLLAKH…INGNYRQTAG (135 aa)) the chain is on the cytoplasmic side. The tract at residues 654 to 697 (SEKSYPARGEAGGEEPEEVPEEGLDEDVEQGDPSGDLQREESLA) is disordered. Acidic residues predominate over residues 665 to 683 (GGEEPEEVPEEGLDEDVEQ). Tyr719 is subject to Phosphotyrosine. Position 720 is a phosphoserine (Ser720).

In terms of assembly, homomultimer. Interacts with NTRK1/TrkA. As to expression, at 11.5 dpc, expressed in spinal nerves, their roots and the ventral spinal cord. At 12.5 dpc, detected in the ventral spinal cord, dorsal root ganglia (DRG), dorsal and ventral roots and sympathetic chain ganglia. At 12.5 dpc, expressed in almost all motor neurons which also express RET and in almost all DRG sensory neurons which also express NTRK1. At 18.5 dpc, expressed only in a subset of NTRK1-expressing neurons but still expressed in nearly all RET-expressing neurons.

The protein localises to the cell membrane. Functionally, required for axon extension during neural development. In Mus musculus (Mouse), this protein is Immunoglobulin superfamily containing leucine-rich repeat protein 2 (Islr2).